The sequence spans 227 residues: Orotidine 5'-phosphate decarboxylase (227 aa).

Substrate contacts are provided by residues aspartate 8, lysine 30, 59 to 68 (DLKLYDIPYT), threonine 118, arginine 178, glutamine 187, glycine 207, and arginine 208. The Proton donor role is filled by lysine 61.

The protein belongs to the OMP decarboxylase family. Type 1 subfamily. Homodimer.

The enzyme catalyses orotidine 5'-phosphate + H(+) = UMP + CO2. It participates in pyrimidine metabolism; UMP biosynthesis via de novo pathway; UMP from orotate: step 2/2. Functionally, catalyzes the decarboxylation of orotidine 5'-monophosphate (OMP) to uridine 5'-monophosphate (UMP). This is Orotidine 5'-phosphate decarboxylase from Helicobacter pylori (strain ATCC 700392 / 26695) (Campylobacter pylori).